A 454-amino-acid chain; its full sequence is MGDHHDFINSGSWWKVSSSSSPSSSSSMRASSIESGGSAVFHDKLHHHSLATDHHLQMIGLGLSSQSPVDQWNQSLLRGDSKAETSFGVMLQENLNLDATSNANANTTSSTSSYQLQESDSSHHHQALWRDPQSDFKPQILTSGGNRGFFLDHQFSPHGSSSTDSSTVTCQGFAVDNSSNAMYAATTTTPNSSSGMFHHQQAGGFGSSDQQPSRNHQQSSLGYSQFGSSTGNYDQMASALPSTWFLRSSPPPKPHSPLRFSNNATFWNPAAAGNAGAPPPHDASSNFFPALQPPQIHPQSFDEQPKNISEIRDSSSNEVKRGGNDHQPAAKRAKSEAASPSPAFKRKEKMGDRIAALQQLVSPFGKTDAASVLSEAIEYIKFLHQQVSALSNPYMKSGASLQHQQSDHSTELEVSEEPDLRSRGLCLVPVSSTFPVTHDTTVDFWTPTFGGTFR.

The span at 101–113 (SNANANTTSSTSS) shows a compositional bias: low complexity. Disordered stretches follow at residues 101–127 (SNAN…HHQA), 185–228 (ATTT…QFGS), 270–348 (AAAG…KRKE), and 398–417 (GASL…VSEE). 2 stretches are compositionally biased toward polar residues: residues 185-195 (ATTTTPNSSSG) and 207-228 (SSDQ…QFGS). Positions 303–324 (EQPKNISEIRDSSSNEVKRGGN) are enriched in basic and acidic residues. A bHLH domain is found at 334–383 (KSEAASPSPAFKRKEKMGDRIAALQQLVSPFGKTDAASVLSEAIEYIKFL).

As to quaternary structure, homodimer.

The protein resides in the nucleus. The protein is Transcription factor bHLH123 (BHLH123) of Arabidopsis thaliana (Mouse-ear cress).